The sequence spans 532 residues: 2,3-bisphosphoglycerate-independent phosphoglycerate mutase (532 aa).

Positions 15 and 65 each coordinate Mn(2+). The active-site Phosphoserine intermediate is the Ser65. Residues His126, 156–157 (RD), Arg188, Arg194, 258–261 (RPDR), and Lys331 each bind substrate. Residues Asp398, His402, Asp439, His440, and His457 each coordinate Mn(2+).

This sequence belongs to the BPG-independent phosphoglycerate mutase family. Monomer. The cofactor is Mn(2+).

It catalyses the reaction (2R)-2-phosphoglycerate = (2R)-3-phosphoglycerate. It functions in the pathway carbohydrate degradation; glycolysis; pyruvate from D-glyceraldehyde 3-phosphate: step 3/5. Catalyzes the interconversion of 2-phosphoglycerate and 3-phosphoglycerate. The polypeptide is 2,3-bisphosphoglycerate-independent phosphoglycerate mutase (Trichodesmium erythraeum (strain IMS101)).